The chain runs to 1582 residues: MEPREMLSSCRQRGSESEFLQGSSSRSPPAPGCSGEPLKGISVGGERMEPEEEDELGSGRDVDCNSNADSEKWVAGDGLEEQEFSIKEANFTEGSLKLKIQTTKRAKKPPKNLENYICPPEIKITIKQSGDQKVSRTGKNSKATKEDERNHSKKKLLTAGDPTASDLKAFQTQAYERPQKHSTLQYDPGHSQGFTSDTLKPKHQQKSSSQSHMEWSSNSDSGPATQNCFISPEAGRDTASTSKVPALEPVASFAKAQSKKGSTGGAWSQLSSSSKDLLLGSVVPSPSSHNSPATPSSSAECNGLQPLGDQDGGSTKDLPEPPTLSSKKKSSKKDMISQTLPNSDLDWVKSAQKAFETTEGKREAYSADSAQEASPARQSISSVSNPENDSSHVRITIPIKTPSLDPSNHKRKKRQSIKAVVEKIVPEKALASGISMSSEVVNRILSNSEGSKKDPRVPKLGKMIENETPSVGLETGGNAEKIVPGGASKQRKPPMVMTSPTRTEHAPSGKLSEIQHPKFAAKRRCSKAKPPAMLREAVLATAEKLMVEPPSAYPITPSSPLYTNTDSLTVITPVKKKRGRPKKQPLLTVETIHEGTSTSPVSPISREFPGTKKRKRRRNLAKLAQLVPGEDKPMSEMKFHKKVGKLGVLDKKTIKTINKMKTLKRKNILNQILSCSSSVALKAKAPPETSPGAASIESKLGKQINVSKRGTIYIGKKRGRKPRTELPPPSEEPKTAIKHPRPVSSQPDVPAVPSSFQSPVASSPAAMHPLSTQLGGSNGNLSPASTETNFSELKTMPNLQPISALPTKTQKGIHGGTWKLSPPRLMANSPSHLCEIGSLKEITLSPVSESHSEETIPSDSGIGTDNNSTSDQAEKSSESRRRYSFDFCSLDNPEAIPSDTSTKNRHGHRQKHLIVDTFLAHESLKKPKHKRKRKSLQNRDDLQFLAELEELITKFQVFRISHRGYTFYHENPYPSIFRINFDQYYPVPYIQYDPLLYLRRTSDLKSKKKRGRPAKTNDTMTKVPFLQGFSYPIPSGSYYAPYGMPYTSMPMMNLGYYGQYPAPLYLSHTLGAASPFMRPTVPPPQFHASSHVKISGATKHKAKHGVHLQGTVGMGLGDIQPSLNPPKVGGATLSSSRLHKRKHKHKRKHKEDRILGTHDNLSGLFAGKATGFSSHLLSERLSGSDKELPLVSEKSKHKERQKHQHGEASHKVSKNNFEVDTLSTLSLSDAQHWTQAKDKGDLSSEPVESCAKRYSGSGGDSTRSEGLDVFSEMNPSSDKWDSDMGGSKRRSFEGFGTYREKDIQAFKMNRKERGSYESSMSPGMPSPHLKVDQTAAHSKSEGSISAMMARKKPTAVDSVAIPSAPVLSLLAASAATSDAASSSLKKRFKRREIEAIQCEVRKMCHYTKLLSTKKNLDHVNKILKAKRLQRQSKTGNNFVKKRRGRPRKQPSQFDEDSRDQMPVLEKCIDLPSKRGQKPSLSPLALEPASGQDAVMATIEAVIHMAREAPPLPPPPPPPLPPPPPPPPPPPPLPKTARGGKRKHRPQPPAQPAQPTPQPLPQEEEVKAKRPRKSRASESDVLP.

Disordered stretches follow at residues 1 to 76, 124 to 246, 278 to 416, and 446 to 513; these read MEPR…WVAG, ITIK…KVPA, LLGS…KRQS, and SNSE…KLSE. A compositionally biased stretch (polar residues) spans 18-27; sequence EFLQGSSSRS. Basic and acidic residues predominate over residues 57-74; that stretch reads GSGRDVDCNSNADSEKWV. Composition is skewed to polar residues over residues 126 to 141 and 213 to 229; these read IKQS…GKNS and MEWS…QNCF. Positions 278–298 are enriched in low complexity; the sequence is LLGSVVPSPSSHNSPATPSSS. Residues 356–365 are compositionally biased toward basic and acidic residues; the sequence is ETTEGKREAY. Positions 368–388 are enriched in polar residues; that stretch reads DSAQEASPARQSISSVSNPEN. The segment covering 450–465 has biased composition (basic and acidic residues); the sequence is GSKKDPRVPKLGKMIE. The a.T hook 1 DNA-binding region spans 575 to 587; that stretch reads KKKRGRPKKQPLL. Disordered stretches follow at residues 595-617 and 709-787; these read GTST…RKRR and RGTI…ASTE. Positions 770-787 are enriched in polar residues; it reads LSTQLGGSNGNLSPASTE. K808 is modified (N6-acetyllysine). Residues 845 to 871 show a composition bias toward polar residues; the sequence is SPVSESHSEETIPSDSGIGTDNNSTSD. The segment at 845 to 880 is disordered; that stretch reads SPVSESHSEETIPSDSGIGTDNNSTSDQAEKSSESR. Residues 1007–1019 constitute a DNA-binding region (a.T hook 2); the sequence is KKKRGRPAKTNDT. Disordered regions lie at residues 1128–1155, 1182–1215, 1236–1265, 1429–1461, 1470–1489, and 1507–1582; these read VGGA…DRIL, SGSD…VSKN, AKDK…TRSE, QRQS…RDQM, LPSK…EPAS, and EAPP…DVLP. Over residues 1137-1150 the composition is skewed to basic residues; that stretch reads RLHKRKHKHKRKHK. The span at 1182–1196 shows a compositional bias: basic and acidic residues; that stretch reads SGSDKELPLVSEKSK. Residues 1439 to 1448 are compositionally biased toward basic residues; it reads VKKRRGRPRK. A DNA-binding region (a.T hook 3) is located at residues 1440–1452; sequence KKRRGRPRKQPSQ. Composition is skewed to pro residues over residues 1509-1533 and 1546-1559; these read PPLP…PPLP and QPPA…PQPL.

Interacts with SET.

It is found in the nucleus. The sequence is that of SET-binding protein (Setbp1) from Mus musculus (Mouse).